The primary structure comprises 360 residues: MAALSLKGVRKSYGGAQYVLHGIDVDIADGEFVVLVGPSGCGKSTLLRMIAGLETVTEGEIAIGGRVVNALEPKDRDIAMVFQNYALYPHMTVAQNMGYGLKIRGVERALIDARVQAAAQILELGPLLARRPRELSGGQRQRVAMGRAIVREPSVFLFDEPLSNLDAKLRVQMRLEIQRLHARLATTSVYVTHDQIEAMTLAQRVIVMNRGYAEQIGAPVDVYEKPATTFVASFIGSPAMNLLHGRLSEDGAAFDVADGPRLPVAGAAGAGRGIAPGREWILGVRPEHMTPQPGEAFATLAVDSCELLGADNLAHGRWGAHDVAVRLPHAMRPTRGETLPVALPARHLHFFDPATGKRAG.

Positions 4-235 (LSLKGVRKSY…PATTFVASFI (232 aa)) constitute an ABC transporter domain. 37-44 (GPSGCGKS) is an ATP binding site.

It belongs to the ABC transporter superfamily. sn-glycerol-3-phosphate importer (TC 3.A.1.1.3) family. In terms of assembly, the complex is composed of two ATP-binding proteins (UgpC), two transmembrane proteins (UgpA and UgpE) and a solute-binding protein (UgpB).

It localises to the cell inner membrane. It catalyses the reaction sn-glycerol 3-phosphate(out) + ATP + H2O = sn-glycerol 3-phosphate(in) + ADP + phosphate + H(+). Its function is as follows. Part of the ABC transporter complex UgpBAEC involved in sn-glycerol-3-phosphate (G3P) import. Responsible for energy coupling to the transport system. This is sn-glycerol-3-phosphate import ATP-binding protein UgpC from Burkholderia pseudomallei (strain K96243).